We begin with the raw amino-acid sequence, 386 residues long: Trichocyst matrix protein T2-A (386 aa).

An N-terminal signal peptide occupies residues 1-19 (MKTVILALALIVLASSTQA). The propeptide occupies 20 to 48 (DVIATIKKIDQSPFGRTLFDTIYLELQTG). Residues 51-154 (LDRLLSTLTD…AEEHEDFEEK (104 aa)) are a coiled coil. Positions 184 to 238 (KGKATKQTHKFTKEVASMIQKHFTTSAKKTAKFQHRKGYSKLFKAFATIASKVEQ) are excised as a propeptide. A coiled-coil region spans residues 293–332 (SALANATSDLASLNDIIAQVEASLDTTEQRIENVSADRHD).

This sequence belongs to the TMP family.

The protein resides in the trichocyst. Its function is as follows. Structural protein that crystallize inside the trichocyst matrix. This is Trichocyst matrix protein T2-A (T2A) from Paramecium tetraurelia.